We begin with the raw amino-acid sequence, 1069 residues long: DNA annealing helicase and endonuclease ZRANB3 (1069 aa).

Residues 46–208 (VFALRRDGRC…FMQIEALFPQ (163 aa)) form the Helicase ATP-binding domain. A DNA annealing helicase activity region spans residues 46-481 (VFALRRDGRC…GRKEKLQATE (436 aa)). Position 59 to 66 (59 to 66 (DEMGLGKT)) interacts with ATP. The DEAH box motif lies at 157–160 (DESH). Residues 325–485 (AVKDYIKMLL…KLQATEDDKE (161 aa)) enclose the Helicase C-terminal domain. The PIP-box signature appears at 518-525 (QHDIRSFF). The segment at 617-646 (PEKGWQCGFCTFLNNPGLPYCEMCENPRSR) adopts a RanBP2-type zinc-finger fold. The segment at 648–720 (AGRNHLQDNN…PEIGQLNNSG (73 aa)) is disordered. Composition is skewed to basic and acidic residues over residues 652–661 (HLQDNNKNDE) and 677–707 (ECER…EDRL). Residues 1001 to 1041 (PGEGHFWQVDHIRPVYEGGGQCSLDNLQTLCTVCHKERTAQ) enclose the HNH domain. The interval 1001–1069 (PGEGHFWQVD…SDITRFLVKK (69 aa)) is endonuclease activity. Residues 1064-1068 (RFLVK) carry the APIM motif motif.

This sequence belongs to the SNF2/RAD54 helicase family. Interacts (via PIP-box and RanBP2-type zinc finger) with PCNA (when PCNA is polyubiquitinated via 'Lys-63'-linked polyubiquitin).

It is found in the nucleus. The protein resides in the chromosome. DNA annealing helicase and endonuclease required to maintain genome stability at stalled or collapsed replication forks by facilitating fork restart and limiting inappropriate recombination that could occur during template switching events. Recruited to the sites of stalled DNA replication by polyubiquitinated PCNA and acts as a structure-specific endonuclease that cleaves the replication fork D-loop intermediate, generating an accessible 3'-OH group in the template of the leading strand, which is amenable to extension by DNA polymerase. In addition to endonuclease activity, also catalyzes the fork regression via annealing helicase activity in order to prevent disintegration of the replication fork and the formation of double-strand breaks. This is DNA annealing helicase and endonuclease ZRANB3 (Zranb3) from Mus musculus (Mouse).